The chain runs to 309 residues: 4-diphosphocytidyl-2-C-methyl-D-erythritol kinase (309 aa).

Residue lysine 28 is part of the active site. 120–130 (PSQAGMGGGSS) is a binding site for ATP. Aspartate 162 is a catalytic residue.

Belongs to the GHMP kinase family. IspE subfamily.

It carries out the reaction 4-CDP-2-C-methyl-D-erythritol + ATP = 4-CDP-2-C-methyl-D-erythritol 2-phosphate + ADP + H(+). Its pathway is isoprenoid biosynthesis; isopentenyl diphosphate biosynthesis via DXP pathway; isopentenyl diphosphate from 1-deoxy-D-xylulose 5-phosphate: step 3/6. Catalyzes the phosphorylation of the position 2 hydroxy group of 4-diphosphocytidyl-2C-methyl-D-erythritol. The chain is 4-diphosphocytidyl-2-C-methyl-D-erythritol kinase from Polaromonas sp. (strain JS666 / ATCC BAA-500).